Here is an 85-residue protein sequence, read N- to C-terminus: U4-theraphotoxin-Hhn1o (85 aa).

Residues 1 to 22 (MKVTLIAILTCAAVLVLHTTAA) form the signal peptide. A propeptide spanning residues 23–48 (EELEAESQLMEVGMPDTELAAVDEER) is cleaved from the precursor. 3 disulfide bridges follow: cysteine 52–cysteine 66, cysteine 56–cysteine 77, and cysteine 71–cysteine 82.

It belongs to the neurotoxin 12 (Hwtx-2) family. 02 (Hwtx-2) subfamily. In terms of tissue distribution, expressed by the venom gland.

It localises to the secreted. Its function is as follows. Postsynaptic neurotoxin. The protein is U4-theraphotoxin-Hhn1o of Cyriopagopus hainanus (Chinese bird spider).